The primary structure comprises 159 residues: Probable cyclic pyranopterin monophosphate synthase (159 aa).

Residues 75 to 77 (LCH) and 111 to 112 (ME) contribute to the substrate site. Asp126 is an active-site residue.

It belongs to the MoaC family. Homohexamer; trimer of dimers.

It carries out the reaction (8S)-3',8-cyclo-7,8-dihydroguanosine 5'-triphosphate = cyclic pyranopterin phosphate + diphosphate. It functions in the pathway cofactor biosynthesis; molybdopterin biosynthesis. Catalyzes the conversion of (8S)-3',8-cyclo-7,8-dihydroguanosine 5'-triphosphate to cyclic pyranopterin monophosphate (cPMP). The chain is Probable cyclic pyranopterin monophosphate synthase from Pyrococcus horikoshii (strain ATCC 700860 / DSM 12428 / JCM 9974 / NBRC 100139 / OT-3).